Consider the following 2434-residue polypeptide: Protein Ycf2 (2434 aa).

1693 to 1700 provides a ligand contact to ATP; that stretch reads GPTETGRS.

It belongs to the Ycf2 family.

The protein resides in the plastid. Its subcellular location is the chloroplast stroma. Its function is as follows. Probable ATPase of unknown function. Its presence in a non-photosynthetic plant (Epifagus virginiana) and experiments in tobacco indicate that it has an essential function which is probably not related to photosynthesis. The polypeptide is Protein Ycf2 (Cycas taitungensis (Prince sago)).